A 561-amino-acid chain; its full sequence is MSLFFKPVISPQWSFPVLLKIGVRSYAGGPRTKHKGNSPLASVPTGSSNKNRKQKAKGKKGNKKNDPDQAFNFGEYGGLKKDVEMNMDSTNKLIQKISNFDQLLILPPVRDAVKEIISKESLKLQDSRKKTSENIIPSPIQTVAIKRISKNLMDPKLQIHAIAAETGSGKTMAYLIPLIDYLKRQELETPELWETLRKNVLIRSIILVPTHELVDQVYETVSKTKTLLGLNSFKWDKATSYRDLLENIKNRIDILVTTPGKLLNLFSIRMITRPDKVLSKVGFVVLDEADTLLDRSWLEETHSAIKRIPNINHLIFCSATIPQEFNKTMQRLFPTVVPIMTPRLHKLPFALDFKVINSALSPFKGSKIKALAQTLYAISNDDTEPGFEKRCIIFVNEKKNVPEIVNLLNKKFGHNAIGLTGEDTFEERSEKIMPFLSPPRPLSEVVAQSTSPPTSLKKFEIPDSNIVIGKLKNTNSNGTAPSNKSLHVLVTTDLMARGLNFKGVRNVVLYDVPKTSIDLIHRVGRTARMKQGGRVFMLTDSKTKSWAKALPKIIKKHQRLS.

The N-terminal 26 residues, 1 to 26 (MSLFFKPVISPQWSFPVLLKIGVRSY), are a transit peptide targeting the mitochondrion. Positions 29 to 72 (GPRTKHKGNSPLASVPTGSSNKNRKQKAKGKKGNKKNDPDQAFN) are disordered. Over residues 50-62 (KNRKQKAKGKKGN) the composition is skewed to basic residues. Positions 98 to 129 (SNFDQLLILPPVRDAVKEIISKESLKLQDSRK) match the Q motif motif. The Helicase ATP-binding domain maps to 131–319 (TSENIIPSPI…NINHLIFCSA (189 aa)). Residue 144–151 (AIKRISKN) participates in ATP binding. The DEAD box signature appears at 267-270 (SIRM). A Helicase C-terminal domain is found at 350–539 (ALDFKVINSA…KQGGRVFMLT (190 aa)).

This sequence belongs to the DEAD box helicase family. MRH4 subfamily.

The protein localises to the mitochondrion. It catalyses the reaction ATP + H2O = ADP + phosphate + H(+). ATP-binding RNA helicase involved in mitochondrial RNA metabolism. Required for maintenance of mitochondrial DNA. This chain is ATP-dependent RNA helicase MRH4, mitochondrial (MRH4), found in Saccharomyces cerevisiae (strain YJM789) (Baker's yeast).